A 331-amino-acid chain; its full sequence is Septin homolog spn2 (331 aa).

The region spanning 29–301 (RGFQFNVMVV…EKFRFKQLSS (273 aa)) is the Septin-type G domain. Positions 39-46 (GPSGSGKS) are G1 motif. GTP is bound by residues 39–46 (GPSGSGKS), Thr-73, Gly-99, 179–187 (KSDSLTLEE), Gly-235, and Arg-250. Residues 96 to 99 (DTPG) form a G3 motif region. The tract at residues 178-181 (AKSD) is G4 motif. The disordered stretch occupies residues 311–331 (RMGSPAPVYPSEPHLHTATAQ).

The protein belongs to the TRAFAC class TrmE-Era-EngA-EngB-Septin-like GTPase superfamily. Septin GTPase family. As to quaternary structure, component of the septin complex composed of two copies of each spn1, spn2, spn3 and spn4. Component of the sporulation-specific septin complex composed of at least spn2, spn5, spn6 and spn7.

The protein resides in the cytoplasm. It localises to the cell cortex. It is found in the forespore membrane. Its function is as follows. Plays a role in the cell cycle. Involved in a late stage of septum formation leading to the separation of the daughter cells. Involved in the correct orientation of forespore membrane extension during sporulation. Binds phosphatidylinositol 4-phosphate. The polypeptide is Septin homolog spn2 (spn2) (Schizosaccharomyces pombe (strain 972 / ATCC 24843) (Fission yeast)).